A 157-amino-acid polypeptide reads, in one-letter code: MHAPMPLLLTGRGFRRDLEANGCLAVHAPLEGGAETRLLRRLRGAGYRTRMTSARGLGDPEVFLTQKHGIRPPHLGHNCVGRGAAVGEVQQVVPLIGDLLDGDDSVALWILEGQVLSRSELLSLCDLCKREPRLRIIVEMGGARSLRWQPMKALLGA.

This sequence belongs to the complex I NdhN subunit family. NDH-1 can be composed of about 15 different subunits; different subcomplexes with different compositions have been identified which probably have different functions.

It is found in the cellular thylakoid membrane. It catalyses the reaction a plastoquinone + NADH + (n+1) H(+)(in) = a plastoquinol + NAD(+) + n H(+)(out). It carries out the reaction a plastoquinone + NADPH + (n+1) H(+)(in) = a plastoquinol + NADP(+) + n H(+)(out). NDH-1 shuttles electrons from an unknown electron donor, via FMN and iron-sulfur (Fe-S) centers, to quinones in the respiratory and/or the photosynthetic chain. The immediate electron acceptor for the enzyme in this species is believed to be plastoquinone. Couples the redox reaction to proton translocation, and thus conserves the redox energy in a proton gradient. Cyanobacterial NDH-1 also plays a role in inorganic carbon-concentration. In Synechococcus sp. (strain CC9902), this protein is NAD(P)H-quinone oxidoreductase subunit N.